Here is a 136-residue protein sequence, read N- to C-terminus: Ergosterol biosynthetic protein 28 (136 aa).

The next 4 membrane-spanning stretches (helical) occupy residues 18–34 (VVVS…SFLT), 56–72 (FGIW…YCAY), 79–95 (VYFL…FHFL), and 109–125 (GLLS…WFMA).

Belongs to the ERG28 family. Heterotetramer of erg25, erg26, erg27 and erg28. Erg28 acts as a scaffold to tether erg27 and other 4,4-demethylation-related enzymes, forming a demethylation enzyme complex, in the endoplasmic reticulum.

It is found in the endoplasmic reticulum membrane. The protein operates within steroid metabolism; ergosterol biosynthesis. Part of the third module of ergosterol biosynthesis pathway that includes by the late steps of the pathway. Erg28 has a role as a scaffold to help anchor the catalytic components of the C-4 demethylation complex erg25, erg26 and erg27 to the endoplasmic reticulum. The third module or late pathway involves the ergosterol synthesis itself through consecutive reactions that mainly occur in the endoplasmic reticulum (ER) membrane. Firstly, the squalene synthase erg9 catalyzes the condensation of 2 farnesyl pyrophosphate moieties to form squalene, which is the precursor of all steroids. Secondly, squalene is converted into lanosterol by the consecutive action of the squalene epoxidase erg1 and the lanosterol synthase erg7. The lanosterol 14-alpha-demethylase erg11/cyp1 catalyzes C14-demethylation of lanosterol to produce 4,4'-dimethyl cholesta-8,14,24-triene-3-beta-ol. In the next steps, a complex process involving various demethylation, reduction and desaturation reactions catalyzed by the C-14 reductase erg24 and the C-4 demethylation complex erg25-erg26-erg27 leads to the production of zymosterol. Erg28 likely functions in the C-4 demethylation complex reaction by tethering erg26 and Erg27 to the endoplasmic reticulum or to facilitate interaction between these proteins. Then, the sterol 24-C-methyltransferase erg6 catalyzes the methyl transfer from S-adenosyl-methionine to the C-24 of zymosterol to form fecosterol. The C-8 sterol isomerase erg2 catalyzes the reaction which results in unsaturation at C-7 in the B ring of sterols and thus converts fecosterol to episterol. The sterol-C5-desaturases erg31 and erg32 then catalyze the introduction of a C-5 double bond in the B ring to produce 5-dehydroepisterol. The C-22 sterol desaturase erg5 further converts 5-dehydroepisterol into ergosta-5,7,22,24(28)-tetraen-3beta-ol by forming the C-22(23) double bond in the sterol side chain. Finally, ergosta-5,7,22,24(28)-tetraen-3beta-ol is substrate of the C-24(28) sterol reductase erg4 to produce ergosterol. In the genus Schizosaccharomyces, a second route exists between lanosterol and fecosterol, via the methylation of lanosterol to eburicol by erg6, followed by C14-demethylation by erg11/cyp1 and C4-demethylation by the demethylation complex erg25-erg26-erg27. Its function is as follows. Extends the chronological lifespan when overexpressed. The protein is Ergosterol biosynthetic protein 28 of Schizosaccharomyces pombe (strain 972 / ATCC 24843) (Fission yeast).